The primary structure comprises 346 residues: Elongation factor Ts (346 aa).

Residues 80–83 form an involved in Mg(2+) ion dislocation from EF-Tu region; that stretch reads TDFV.

It belongs to the EF-Ts family.

It is found in the cytoplasm. Associates with the EF-Tu.GDP complex and induces the exchange of GDP to GTP. It remains bound to the aminoacyl-tRNA.EF-Tu.GTP complex up to the GTP hydrolysis stage on the ribosome. The chain is Elongation factor Ts from Streptococcus pyogenes serotype M1.